The following is a 163-amino-acid chain: MADSSFDVVSKVERQEVDNALHQAGKELSTRFDFRNTGASIEWSGEETITLTADTEERLLAALDVFKEKLIRRDISLKAFDAGEPAQSGKIYKLSGSLVQGITTENAKKITKKIRDEGPKGVKAQIQGDELRVSSKKRDDLQAVISLLKGEDFGIALQFVNYR.

This sequence belongs to the YajQ family.

Its function is as follows. Nucleotide-binding protein. The polypeptide is Nucleotide-binding protein RHA1_ro01989 (Rhodococcus jostii (strain RHA1)).